A 264-amino-acid polypeptide reads, in one-letter code: 3-methyl-2-oxobutanoate hydroxymethyltransferase (264 aa).

2 residues coordinate Mg(2+): aspartate 42 and aspartate 81. 3-methyl-2-oxobutanoate contacts are provided by residues 42-43, aspartate 81, and lysine 110; that span reads DS. Position 112 (glutamate 112) interacts with Mg(2+). The active-site Proton acceptor is the glutamate 179.

This sequence belongs to the PanB family. As to quaternary structure, homodecamer; pentamer of dimers. It depends on Mg(2+) as a cofactor.

It localises to the cytoplasm. The catalysed reaction is 3-methyl-2-oxobutanoate + (6R)-5,10-methylene-5,6,7,8-tetrahydrofolate + H2O = 2-dehydropantoate + (6S)-5,6,7,8-tetrahydrofolate. The protein operates within cofactor biosynthesis; (R)-pantothenate biosynthesis; (R)-pantoate from 3-methyl-2-oxobutanoate: step 1/2. Catalyzes the reversible reaction in which hydroxymethyl group from 5,10-methylenetetrahydrofolate is transferred onto alpha-ketoisovalerate to form ketopantoate. The protein is 3-methyl-2-oxobutanoate hydroxymethyltransferase of Francisella tularensis subsp. tularensis (strain FSC 198).